We begin with the raw amino-acid sequence, 329 residues long: GTP 3',8-cyclase (329 aa).

Positions Ala-8–Ala-234 constitute a Radical SAM core domain. Arg-17 contributes to the GTP binding site. Positions 24 and 28 each coordinate [4Fe-4S] cluster. An S-adenosyl-L-methionine-binding site is contributed by Tyr-30. Cys-31 is a [4Fe-4S] cluster binding site. Residue Arg-68 coordinates GTP. Position 72 (Gly-72) interacts with S-adenosyl-L-methionine. Thr-99 contributes to the GTP binding site. Ser-123 contributes to the S-adenosyl-L-methionine binding site. Lys-160 is a binding site for GTP. Met-194 serves as a coordination point for S-adenosyl-L-methionine. Residues Cys-257 and Cys-260 each coordinate [4Fe-4S] cluster. Arg-262–Arg-264 is a GTP binding site. Cys-274 lines the [4Fe-4S] cluster pocket.

The protein belongs to the radical SAM superfamily. MoaA family. As to quaternary structure, monomer and homodimer. It depends on [4Fe-4S] cluster as a cofactor.

It catalyses the reaction GTP + AH2 + S-adenosyl-L-methionine = (8S)-3',8-cyclo-7,8-dihydroguanosine 5'-triphosphate + 5'-deoxyadenosine + L-methionine + A + H(+). It functions in the pathway cofactor biosynthesis; molybdopterin biosynthesis. Functionally, catalyzes the cyclization of GTP to (8S)-3',8-cyclo-7,8-dihydroguanosine 5'-triphosphate. This Cronobacter sakazakii (strain ATCC BAA-894) (Enterobacter sakazakii) protein is GTP 3',8-cyclase.